We begin with the raw amino-acid sequence, 308 residues long: Ecto-ADP-ribosyltransferase 5 (308 aa).

An N-terminal signal peptide occupies residues 1-23; sequence MILEDLLMVLSCLALHILWKVQA. A disulfide bond links C43 and C259. One can recognise a TR mART core domain in the interval 63-253; the sequence is ALLRESWEAA…IVTLWSYNQT (191 aa). Y100 serves as a coordination point for NAD(+). N102 carries an N-linked (GlcNAc...) asparagine glycan. Residues R161 and Q181 each coordinate NAD(+). Residue R161 is part of the active site. S184 is an active-site residue. A glycan (N-linked (GlcNAc...) asparagine) is linked at N197. S215 serves as a coordination point for NAD(+). The active site involves E222. A glycan (N-linked (GlcNAc...) asparagine) is linked at N251.

Belongs to the Arg-specific ADP-ribosyltransferase family.

It localises to the secreted. It is found in the membrane. The catalysed reaction is L-arginyl-[protein] + NAD(+) = N(omega)-(ADP-D-ribosyl)-L-arginyl-[protein] + nicotinamide + H(+). The chain is Ecto-ADP-ribosyltransferase 5 (Art5) from Rattus norvegicus (Rat).